The primary structure comprises 47 residues: Large ribosomal subunit protein eL40 (47 aa).

The protein belongs to the eukaryotic ribosomal protein eL40 family.

The sequence is that of Large ribosomal subunit protein eL40 from Methanocaldococcus jannaschii (strain ATCC 43067 / DSM 2661 / JAL-1 / JCM 10045 / NBRC 100440) (Methanococcus jannaschii).